The following is a 534-amino-acid chain: Potential RNA-dependent RNA polymerase (534 aa).

Positions 255-373 (DVVVCTDFSK…TYPGISAEDV (119 aa)) constitute a RdRp catalytic domain.

It is found in the virion. It carries out the reaction RNA(n) + a ribonucleoside 5'-triphosphate = RNA(n+1) + diphosphate. Functionally, RNA-directed RNA polymerase that is involved in both transcription and genome replication. This Human picobirnavirus (strain Human/Thailand/Hy005102/-) (PBV) protein is Potential RNA-dependent RNA polymerase (Segment-2).